A 539-amino-acid polypeptide reads, in one-letter code: Protein pim1 (539 aa).

Residues 1-53 are disordered; it reads MTSNRSTRSSTKREEVSKNGVEKRELDESDVMKNGKKPVKRAKVSSLPKPVRV. Residues 11–33 are compositionally biased toward basic and acidic residues; sequence TKREEVSKNGVEKRELDESDVMK. The segment covering 34 to 43 has biased composition (basic residues); the sequence is NGKKPVKRAK. RCC1 repeat units lie at residues 70–125, 127–191, 192–243, 244–296, 298–353, 354–417, and 419–472; these read RLNV…ALSH, GRVY…AITD, NGCC…ALTT, TGKV…AIDN, GRVY…ALLE, DGRV…AVTS, and GKVY…IAGI. Residues 478 to 539 form a disordered region; it reads EPVANGIKSE…SVLEPSSTTA (62 aa). Residues 486–504 are compositionally biased toward basic and acidic residues; the sequence is SEPENEKKLKTEETSKTDD. Positions 514–525 are enriched in polar residues; it reads VTSNGEPSTATS.

Oligomer of dis3, pim1 and spi1. Interacts with ned1.

The protein resides in the nucleus. In terms of biological role, promotes the exchange of Ran(spi1)-bound GDP by GTP. Involved in the control of mitosis. Regulates a variety of nuclear events, including mitotic check-point, chromosome decondensation and mRNA processing/transport. This Schizosaccharomyces pombe (strain 972 / ATCC 24843) (Fission yeast) protein is Protein pim1 (pim1).